Reading from the N-terminus, the 452-residue chain is Glutamyl-tRNA(Gln) amidotransferase subunit A (452 aa).

Active-site charge relay system residues include Lys-56 and Ser-131. Residue Ser-155 is the Acyl-ester intermediate of the active site.

It belongs to the amidase family. GatA subfamily. Heterotrimer of A, B and C subunits.

The catalysed reaction is L-glutamyl-tRNA(Gln) + L-glutamine + ATP + H2O = L-glutaminyl-tRNA(Gln) + L-glutamate + ADP + phosphate + H(+). Functionally, allows the formation of correctly charged Gln-tRNA(Gln) through the transamidation of misacylated Glu-tRNA(Gln) in organisms which lack glutaminyl-tRNA synthetase. The reaction takes place in the presence of glutamine and ATP through an activated gamma-phospho-Glu-tRNA(Gln). In Campylobacter hominis (strain ATCC BAA-381 / DSM 21671 / CCUG 45161 / LMG 19568 / NCTC 13146 / CH001A), this protein is Glutamyl-tRNA(Gln) amidotransferase subunit A.